Consider the following 251-residue polypeptide: Triosephosphate isomerase (251 aa).

9–11 (NWK) contacts substrate. H95 acts as the Electrophile in catalysis. The active-site Proton acceptor is the E167. Substrate-binding positions include G173, S213, and 234–235 (GG).

This sequence belongs to the triosephosphate isomerase family. Homodimer.

The protein resides in the cytoplasm. It carries out the reaction D-glyceraldehyde 3-phosphate = dihydroxyacetone phosphate. The protein operates within carbohydrate biosynthesis; gluconeogenesis. It functions in the pathway carbohydrate degradation; glycolysis; D-glyceraldehyde 3-phosphate from glycerone phosphate: step 1/1. Functionally, involved in the gluconeogenesis. Catalyzes stereospecifically the conversion of dihydroxyacetone phosphate (DHAP) to D-glyceraldehyde-3-phosphate (G3P). The sequence is that of Triosephosphate isomerase from Carboxydothermus hydrogenoformans (strain ATCC BAA-161 / DSM 6008 / Z-2901).